Reading from the N-terminus, the 141-residue chain is Hemoglobin subunit alpha (141 aa).

Positions V1–R141 constitute a Globin domain. Phosphoserine is present on S3. K7 is modified (N6-succinyllysine). T8 is modified (phosphothreonine). At K11 the chain carries N6-succinyllysine. Position 16 is an N6-acetyllysine; alternate (K16). An N6-succinyllysine; alternate modification is found at K16. Residue Y24 is modified to Phosphotyrosine. K40 bears the N6-succinyllysine mark. S49 is modified (phosphoserine). H58 provides a ligand contact to O2. Residue H87 coordinates heme b. Position 102 is a phosphoserine (S102). The residue at position 108 (T108) is a Phosphothreonine. Residue S124 is modified to Phosphoserine. 2 positions are modified to phosphothreonine: T134 and T137. S138 is modified (phosphoserine).

Belongs to the globin family. As to quaternary structure, heterotetramer of two alpha chains and two beta chains. In terms of tissue distribution, red blood cells.

Involved in oxygen transport from the lung to the various peripheral tissues. Its function is as follows. Hemopressin acts as an antagonist peptide of the cannabinoid receptor CNR1. Hemopressin-binding efficiently blocks cannabinoid receptor CNR1 and subsequent signaling. In Camelus dromedarius (Dromedary), this protein is Hemoglobin subunit alpha (HBA).